We begin with the raw amino-acid sequence, 264 residues long: Transmembrane protein 41A (264 aa).

A signal peptide spans 1-17; the sequence is MRALLGLLLVFGGCTFA. Helical transmembrane passes span 67 to 87, 100 to 122, 153 to 173, 175 to 195, and 219 to 239; these read AYVF…AIPG, GPWL…CYLL, LFFF…FLNL, APIL…GLIP, and WETV…GTLI. Residues 96–207 form a VTT domain region; sequence GALFGPWLGL…FICVQTGSIL (112 aa).

This sequence belongs to the TMEM41 family.

It is found in the membrane. This Mus musculus (Mouse) protein is Transmembrane protein 41A (Tmem41a).